A 239-amino-acid chain; its full sequence is Fatty acid metabolism regulator protein (239 aa).

The HTH gntR-type domain occupies 6–74 (KGPASFAEKY…HGKPTRVNNF (69 aa)). The segment at residues 34–53 (ERELSELIGVTRTTLREVLQ) is a DNA-binding region (H-T-H motif).

Homodimer.

The protein localises to the cytoplasm. Multifunctional regulator of fatty acid metabolism. This is Fatty acid metabolism regulator protein from Shewanella halifaxensis (strain HAW-EB4).